Here is a 315-residue protein sequence, read N- to C-terminus: FGFR1 oncogene partner 2 homolog (315 aa).

Coiled coils occupy residues 32 to 99 and 156 to 183; these read EEAE…RAME and VVQRELQTISQLRLENETLRELLQISKQ. Disordered regions lie at residues 201-222 and 238-315; these read KAVQTDSTADDSADDLSISGAS and PEQP…APAT. Residues 246–269 show a composition bias toward polar residues; the sequence is GTTNSFNTAPVHSQSETQAPSVTL.

It belongs to the SIKE family.

The protein is FGFR1 oncogene partner 2 homolog of Drosophila melanogaster (Fruit fly).